A 189-amino-acid polypeptide reads, in one-letter code: Protein Rex (189 aa).

Basic residues predominate over residues 1–16; it reads MPKTRRRPRRSQRKRP. The tract at residues 1 to 28 is disordered; it reads MPKTRRRPRRSQRKRPPTPWPTSQGLDR. The Nuclear localization signal, and RNA-binding (RxRE) motif lies at 2–18; sequence PKTRRRPRRSQRKRPPT. The homomultimerization stretch occupies residues 56-70; that stretch reads RPVYIVTPYWPPVQS. Serine 70 carries the post-translational modification Phosphoserine; by host. The Nuclear export signal signature appears at 82–93; it reads LSAQLYSSLSLD. Residues 84–94 are compositionally biased toward low complexity; that stretch reads AQLYSSLSLDS. The disordered stretch occupies residues 84–189; the sequence is AQLYSSLSLD…PPSPGPSCPT (106 aa). Over residues 111–125 the composition is skewed to pro residues; it reads RRPPIQPPTFHPPSS. A homomultimerization region spans residues 123–131; that stretch reads PSSRPCANT. Residues 127-164 show a composition bias toward polar residues; sequence PCANTPPSETDTWNPPLGSTSQPCLFQTPASGPKTCTP. Threonine 174 bears the Phosphothreonine; by host mark. Position 177 is a phosphoserine; by host (serine 177). Over residues 178–189 the composition is skewed to pro residues; it reads FPPPSPGPSCPT.

The protein belongs to the deltaretrovirus Rex protein family. Homomultimer. Multimeric assembly is essential for activity and involves XPO1. Binds to human XPO1 and KPNB1. Interacts (via N-terminal nuclear localization signal) with human NPM1. In terms of processing, phosphorylated.

The protein localises to the host nucleus. It is found in the host nucleolus. The protein resides in the host cytoplasm. Rex escorts unspliced gag-pro-pol and singly spliced env mRNAs out of the nucleus of infected cells. These mRNAs carry a recognition sequence called Rex responsive element (RxRE or XRE) located at the 3' region of the long terminal repeat (LTR). This function is essential since most HTLV proteins are translated from unspliced or partially spliced pre-mRNAs that cannot exit the nucleus by the pathway used by fully processed cellular mRNAs. Rex itself is translated from a fully spliced mRNA that probably readily exits the nucleus. Rex's nuclear localization signal (NLS) binds directly to KPNB1/importin beta-1 without previous binding to KPNA1/importin alpha-1. KPNB1 binds to the GDP bound form of RAN (Ran-GDP) and targets Rex to the nucleus. In the nucleus, the conversion from Ran-GDP to Ran-GTP dissociates Rex from KPNB1 and allows Rex's binding to the RRE in viral pre-mRNAs. Rex multimerizes on the RRE via cooperative assembly. This multimerization is critical for its full biological activity, since it may shield the viral RNA from being spliced or down-regulated, and probably exposes Rex's nuclear export signal (NES) to the surface. Rex can then form a complex with XPO1/CRM1, RANBP3 and Ran-GTP, leading to nuclear export of the complex. Conversion from Ran-GTP to Ran-GDP mediates dissociation of the Rex/RRE/XPO1/RANBP3/RAN complex, so that Rex can return to the nucleus for a subsequent round of export. The chain is Protein Rex from Homo sapiens (Human).